Here is a 181-residue protein sequence, read N- to C-terminus: Large ribosomal subunit protein uL5c (181 aa).

The protein belongs to the universal ribosomal protein uL5 family. In terms of assembly, part of the 50S ribosomal subunit; contacts the 5S rRNA.

It localises to the plastid. In terms of biological role, binds 5S rRNA, forms part of the central protuberance of the 50S subunit. In Helicosporidium sp. subsp. Simulium jonesii (Green alga), this protein is Large ribosomal subunit protein uL5c (rpl5).